The chain runs to 101 residues: Large ribosomal subunit protein bL21 (101 aa).

Belongs to the bacterial ribosomal protein bL21 family. Part of the 50S ribosomal subunit. Contacts protein L20.

Functionally, this protein binds to 23S rRNA in the presence of protein L20. The protein is Large ribosomal subunit protein bL21 of Corynebacterium efficiens (strain DSM 44549 / YS-314 / AJ 12310 / JCM 11189 / NBRC 100395).